The chain runs to 78 residues: MLVLSRKANESIKIDSNIEISILEIKKDSVKIAIKAPANIKILRSEIYDIIKEENKKSILQDKNNIHKIKNLFDYLSK.

It belongs to the CsrA/RsmA family. As to quaternary structure, homodimer; the beta-strands of each monomer intercalate to form a hydrophobic core, while the alpha-helices form wings that extend away from the core.

It is found in the cytoplasm. Functionally, a translational regulator that binds mRNA to regulate translation initiation and/or mRNA stability. Usually binds in the 5'-UTR at or near the Shine-Dalgarno sequence preventing ribosome-binding, thus repressing translation. Its main target seems to be the major flagellin gene, while its function is anatagonized by FliW. The polypeptide is Translational regulator CsrA (Borrelia turicatae (strain 91E135)).